A 213-amino-acid polypeptide reads, in one-letter code: Protein-L-isoaspartate O-methyltransferase (213 aa).

S60 is an active-site residue.

This sequence belongs to the methyltransferase superfamily. L-isoaspartyl/D-aspartyl protein methyltransferase family.

It localises to the cytoplasm. It catalyses the reaction [protein]-L-isoaspartate + S-adenosyl-L-methionine = [protein]-L-isoaspartate alpha-methyl ester + S-adenosyl-L-homocysteine. Functionally, catalyzes the methyl esterification of L-isoaspartyl residues in peptides and proteins that result from spontaneous decomposition of normal L-aspartyl and L-asparaginyl residues. It plays a role in the repair and/or degradation of damaged proteins. This chain is Protein-L-isoaspartate O-methyltransferase, found in Roseobacter denitrificans (strain ATCC 33942 / OCh 114) (Erythrobacter sp. (strain OCh 114)).